A 159-amino-acid polypeptide reads, in one-letter code: Transcription elongation factor GreA (159 aa).

It belongs to the GreA/GreB family.

Necessary for efficient RNA polymerase transcription elongation past template-encoded arresting sites. The arresting sites in DNA have the property of trapping a certain fraction of elongating RNA polymerases that pass through, resulting in locked ternary complexes. Cleavage of the nascent transcript by cleavage factors such as GreA or GreB allows the resumption of elongation from the new 3'terminus. GreA releases sequences of 2 to 3 nucleotides. The polypeptide is Transcription elongation factor GreA (Orientia tsutsugamushi (strain Boryong) (Rickettsia tsutsugamushi)).